The following is a 147-amino-acid chain: F420H(2)-dependent reductase Rv1155 (147 aa).

Coenzyme F420-(gamma-Glu)n is bound by residues Gln32, Gln37, Ser50, 56-60 (AKTRN), 77-79 (WSY), and His138.

Belongs to the F420H(2)-dependent biliverdin reductase family. Homodimer.

F420H(2)-dependent reductase able to catalyze the reduction of biliverdin-IXalpha to bilirubin-IXalpha in vitro. However, kinetic parameters show that it is less efficient than the biliverdin reductase Rv2074 and suggest biliverdin-IXalpha is unlikely to be the native substrate of Rv1155, which probably catalyzes the reduction of an alternative molecule in vivo. Binds coenzyme F420, but does not bind FMN or other flavins. Cannot use pyridoxine 5'-phosphate, pyridoxamine 5'-phosphate, pyridoxal 5'-phosphate (PLP), the anti-tuberculosis drug PA-824 or aflatoxin analogs as substrates. The protein is F420H(2)-dependent reductase Rv1155 of Mycobacterium tuberculosis (strain ATCC 25618 / H37Rv).